A 478-amino-acid polypeptide reads, in one-letter code: MASEKDAGKQSAVKLVPLLITVAVGLIIWFIPAPSGLEPKAWHLFAIFVATIIGFISKPLPMGAIAIFALAVTALTGTLSIEDTLSGFGNKTIWLIVIAFFISRGFIKTGLGARISYVFVQKFGKKTLGLSYSLLFSDLILSPAIPSNTARAGGIIFPIIRSLSETFGSSPANGTERKIGAFLLKTGFQGNLITSAMFLTAMAANPLIAKLAHDVAGVDLTWTSWAIAAIVPGLVSLIITPLVIYKLYPPEIKETPDAAKIATEKLKEMGPFKKSELSMVIVFLLVLVLWIFGGSFNIDATTTALIGLAVLLLSQVLTWDDIKKEQGAWDTLTWFAALVMLANFLNELGMVSWFSNAMKSSVSGFSWIVAFIILIVVYYYSHYFFASATAHISAMYSAFLAVVVAAGAPPLLAALSLAFISNLFGSTTHYGSGAAPVFFGAGYIPQGKWWSIGFILSIVHIIVWLVIGGLWWKVLGIW.

12 consecutive transmembrane segments (helical) span residues 12 to 31 (AVKL…IWFI), 41 to 57 (AWHL…GFIS), 64 to 81 (AIAI…TLSI), 96 to 118 (IVIA…ISYV), 187 to 209 (GFQG…PLIA), 222 to 244 (WTSW…PLVI), 277 to 296 (LSMV…GGSF), 300 to 319 (ATTT…VLTW), 332 to 354 (LTWF…VSWF), 364 to 386 (GFSW…YFFA), 398 to 420 (AFLA…LAFI), and 450 to 472 (WSIG…GLWW).

It belongs to the SLC13A/DASS transporter (TC 2.A.47) family. DIT1 subfamily.

It is found in the cell membrane. Functionally, might be a malate transporter. This is Putative malate transporter YflS (yflS) from Bacillus subtilis (strain 168).